A 100-amino-acid chain; its full sequence is Cell division topological specificity factor (100 aa).

It belongs to the MinE family.

In terms of biological role, prevents the cell division inhibition by proteins MinC and MinD at internal division sites while permitting inhibition at polar sites. This ensures cell division at the proper site by restricting the formation of a division septum at the midpoint of the long axis of the cell. The polypeptide is Cell division topological specificity factor (Blochmanniella floridana).